Reading from the N-terminus, the 97-residue chain is Aspartyl/glutamyl-tRNA(Asn/Gln) amidotransferase subunit C (97 aa).

This sequence belongs to the GatC family. In terms of assembly, heterotrimer of A, B and C subunits.

The enzyme catalyses L-glutamyl-tRNA(Gln) + L-glutamine + ATP + H2O = L-glutaminyl-tRNA(Gln) + L-glutamate + ADP + phosphate + H(+). The catalysed reaction is L-aspartyl-tRNA(Asn) + L-glutamine + ATP + H2O = L-asparaginyl-tRNA(Asn) + L-glutamate + ADP + phosphate + 2 H(+). Functionally, allows the formation of correctly charged Asn-tRNA(Asn) or Gln-tRNA(Gln) through the transamidation of misacylated Asp-tRNA(Asn) or Glu-tRNA(Gln) in organisms which lack either or both of asparaginyl-tRNA or glutaminyl-tRNA synthetases. The reaction takes place in the presence of glutamine and ATP through an activated phospho-Asp-tRNA(Asn) or phospho-Glu-tRNA(Gln). This chain is Aspartyl/glutamyl-tRNA(Asn/Gln) amidotransferase subunit C, found in Prochlorococcus marinus (strain MIT 9215).